The sequence spans 146 residues: Hemoglobin subunit beta (146 aa).

The Globin domain maps to 2-146; it reads HWSAEEKQLI…VAHALARKYH (145 aa). Heme b contacts are provided by histidine 63 and histidine 92.

The protein belongs to the globin family. As to quaternary structure, heterotetramer of two alpha chains and two beta chains. As to expression, red blood cells.

Its function is as follows. Involved in oxygen transport from the lung to the various peripheral tissues. The sequence is that of Hemoglobin subunit beta (HBB) from Aptenodytes forsteri (Emperor penguin).